A 241-amino-acid chain; its full sequence is MLSESLTKTKLTDPLILELLQNIREHRSMLEDLKSIKVDPELSNIISNEIGRELYIENEFHKARGFRKLHIEVAEFSKNLKILHCVFFPDPKFDIPIFGMDLVKINDIVSAAIVDLSPASQNQGVKYEKFLSKVDKSSFTSLREIPKWGEIFSENVFFASLKSKSEENDFCKVVDEYLSILIKLSKEAKPEFKEEIIKERKNYQKNYCVQQMKNEKTSMVLLKYFDEKWVNNYIKTVLFDF.

It belongs to the HY2 family.

The catalysed reaction is (2R,3Z)-phycocyanobilin + 4 oxidized [2Fe-2S]-[ferredoxin] = biliverdin IXalpha + 4 reduced [2Fe-2S]-[ferredoxin] + 4 H(+). Its function is as follows. Catalyzes the four-electron reduction of biliverdin IX-alpha (2-electron reduction at both the A and D rings); the reaction proceeds via an isolatable 2-electron intermediate, 181,182-dihydrobiliverdin. This is Phycocyanobilin:ferredoxin oxidoreductase from Prochlorococcus marinus (strain MIT 9312).